We begin with the raw amino-acid sequence, 394 residues long: General receptor for phosphoinositides 1-associated scaffold protein (394 aa).

Positions 1–51 (MTLRRLRKLQQKEEATAAPDLAGRAPDSEAARAAPTPSGPPAAAAPPGAPG) are disordered. Positions 37-49 (PSGPPAAAAPPGA) are enriched in pro residues. At Thr-76 the chain carries Phosphothreonine. Phosphoserine is present on Ser-93. The PDZ domain maps to 100–189 (VLTLEKGDNQ…VLRLETLYGT (90 aa)). An interaction with PSCD3 region spans residues 180–257 (VLRLETLYGT…GAGLLPGSLP (78 aa)). Tyr-236 carries the post-translational modification Phosphotyrosine. An Omega-N-methylarginine modification is found at Arg-269. Residues 293–318 (EPQALPPPPPPARAPGPGSAETPASV) form a disordered region. Residues 296–306 (ALPPPPPPARA) show a composition bias toward pro residues. Ser-386 carries the post-translational modification Phosphoserine.

In terms of assembly, heteromer. Composed of TAMALIN, CYTH2 and at least one GRM1. Also interacts with CYTH3, GRM2, GRM3 and GRM5. In terms of tissue distribution, expressed in brain.

The protein localises to the cytoplasm. Its subcellular location is the perinuclear region. The protein resides in the cell membrane. It localises to the postsynaptic cell membrane. Its function is as follows. Plays a role in intracellular trafficking and contributes to the macromolecular organization of group 1 metabotropic glutamate receptors (mGluRs) at synapses. This Rattus norvegicus (Rat) protein is General receptor for phosphoinositides 1-associated scaffold protein.